The following is a 191-amino-acid chain: Putative glutathione-dependent formaldehyde-activating enzyme (191 aa).

The CENP-V/GFA domain occupies 20–166; that stretch reads FAGGKLRCHC…FKALGLQTYD (147 aa). Zn(2+) is bound by residues Cys-27, Cys-29, Cys-48, Cys-50, Cys-53, Cys-95, and Cys-98.

It belongs to the Gfa family. It depends on Zn(2+) as a cofactor.

It carries out the reaction S-(hydroxymethyl)glutathione = glutathione + formaldehyde. The protein operates within one-carbon metabolism; formaldehyde degradation; formate from formaldehyde (glutathione route): step 1/3. Functionally, catalyzes the condensation of formaldehyde and glutathione to S-hydroxymethylglutathione. The protein is Putative glutathione-dependent formaldehyde-activating enzyme of Penicillium rubens (strain ATCC 28089 / DSM 1075 / NRRL 1951 / Wisconsin 54-1255) (Penicillium chrysogenum).